We begin with the raw amino-acid sequence, 80 residues long: UPF0512 protein J (80 aa).

It belongs to the UPF0512 family.

The chain is UPF0512 protein J from Dictyostelium discoideum (Social amoeba).